A 748-amino-acid chain; its full sequence is Methylmalonyl-CoA mutase, mitochondrial (748 aa).

The transit peptide at 1 to 30 (MLRAKNQLFLLSPHYLKQLNIPSASRWKRL) directs the protein to the mitochondrion. Q48 provides a ligand contact to malonyl-CoA. Position 87 is an N6-acetyllysine (K87). Residues 94–97 (YPTM) and 104–108 (TIRQY) each bind malonyl-CoA. K210 is modified (N6-acetyllysine). Malonyl-CoA-binding positions include 214-216 (TIQ), R226, K253, H263, and 302-304 (RLS). The residue at position 333 (K333) is an N6-acetyllysine. Residue K341 is modified to N6-succinyllysine. A Phosphoserine modification is found at S479. N6-succinyllysine is present on K593. An N6-acetyllysine modification is found at K600. The B12-binding domain maps to 612 to 744 (RPRLLVAKMG…DDIEKCLAEK (133 aa)). Residue H625 participates in adenosylcob(III)alamin binding.

Belongs to the methylmalonyl-CoA mutase family. Homodimer. Interacts (the apoenzyme form) with MMAA; the interaction is GTP dependent. The cofactor is adenosylcob(III)alamin.

Its subcellular location is the mitochondrion matrix. It localises to the mitochondrion. The protein resides in the cytoplasm. The enzyme catalyses (R)-methylmalonyl-CoA = succinyl-CoA. With respect to regulation, inhibited by itaconyl-CoA, a metabolite that inactivates the coenzyme B12 cofactor. Its function is as follows. Catalyzes the reversible isomerization of methylmalonyl-CoA (MMCoA) (generated from branched-chain amino acid metabolism and degradation of dietary odd chain fatty acids and cholesterol) to succinyl-CoA (3-carboxypropionyl-CoA), a key intermediate of the tricarboxylic acid cycle. The chain is Methylmalonyl-CoA mutase, mitochondrial (Mmut) from Mus musculus (Mouse).